A 378-amino-acid polypeptide reads, in one-letter code: Circumsporozoite protein (378 aa).

The N-terminal stretch at 1–22 is a signal peptide; it reads MKNFILLAVSSILLVDLFPTHC. The segment at 51–295 is disordered; that stretch reads HVGQSASRGR…NNEGANAPNE (245 aa). Residues 72-100 show a composition bias toward basic and acidic residues; that stretch reads DAKKKKDGKKAEPKNPRENKLKQPGDRAD. Residues 80 to 88 are required for the binding to heparan sulfate proteoglycans (HSPGs) on the surface of host hepatocytes; the sequence is KKAEPKNPR. A region I; contains the proteolytic cleavage site region spans residues 91–95; it reads KLKQP. A run of 19 repeats spans residues 95 to 103, 104 to 112, 113 to 121, 122 to 130, 131 to 139, 140 to 148, 149 to 157, 158 to 166, 167 to 175, 176 to 184, 185 to 193, 194 to 202, 203 to 211, 212 to 220, 221 to 229, 230 to 238, 239 to 247, 248 to 256, and 257 to 265. A 19 X 9 AA tandem repeats of [PA]-G-D-R-A-[DA]-G-Q-P region spans residues 95-265; sequence PGDRADGQPA…PAGDRAAGQP (171 aa). Positions 266 to 284 are enriched in gly residues; it reads AGNGAGGQAAGGNAGGGQG. Low complexity predominate over residues 285–295; it reads QNNEGANAPNE. Residues 304 to 356 enclose the TSP type-1 domain; it reads KVRATVGTEWTPCSVTCGVGVRVRRRVNAANKKPEDLTLNDLETDVCTMDKCA. Intrachain disulfides connect Cys316-Cys350 and Cys320-Cys355. An O-linked (Fuc) threonine glycan is attached at Thr319. Residue Cys355 is the site of GPI-anchor amidated cysteine attachment. Residues 356-378 constitute a propeptide, removed in mature form; that stretch reads AGIFNVVSNSLGLVILLVLALFN.

Belongs to the plasmodium circumsporozoite protein family. Post-translationally, during host cell invasion, proteolytically cleaved at the cell membrane in the region I by a papain-like cysteine protease of parasite origin. Cleavage is triggered by the sporozoite contact with highly sulfated heparan sulfate proteoglycans (HSPGs) present on the host hepatocyte cell surface. Cleavage exposes the TSP type-1 (TSR) domain and is required for productive invasion of host hepatocytes but not for adhesion to the host cell membrane. Cleavage is dispensable for sporozoite development in the oocyst, motility and for traversal of host and vector cells. O-glycosylated; maybe by POFUT2.

It is found in the cell membrane. It localises to the cytoplasm. Functionally, essential sporozoite protein. In the mosquito vector, required for sporozoite development in the oocyst, migration through the vector hemolymph and entry into the vector salivary glands. In the vertebrate host, required for sporozoite migration through the host dermis and infection of host hepatocytes. Binds to highly sulfated heparan sulfate proteoglycans (HSPGs) on the surface of host hepatocytes. In the vertebrate host, binds to highly sulfated heparan sulfate proteoglycans (HSPGs) on the surface of host hepatocytes and is required for sporozoite invasion of the host hepatocytes. This Plasmodium vivax (strain Belem) protein is Circumsporozoite protein.